The chain runs to 153 residues: Histone H2B.3 (153 aa).

The segment covering methionine 1 to proline 28 has biased composition (basic and acidic residues). The segment at methionine 1–lysine 60 is disordered. An N6-acetyllysine mark is found at lysine 7 and lysine 37. Lysine 149 is covalently cross-linked (Glycyl lysine isopeptide (Lys-Gly) (interchain with G-Cter in ubiquitin)).

It belongs to the histone H2B family. In terms of assembly, the nucleosome is a histone octamer containing two molecules each of H2A, H2B, H3 and H4 assembled in one H3-H4 heterotetramer and two H2A-H2B heterodimers. The octamer wraps approximately 147 bp of DNA. Can be acetylated to form H2BK6ac and H2BK33ac. Post-translationally, monoubiquitinated to form H2BK143ub1; may give a specific tag for epigenetic transcriptional activation.

It localises to the nucleus. It is found in the chromosome. Functionally, core component of nucleosome. Nucleosomes wrap and compact DNA into chromatin, limiting DNA accessibility to the cellular machineries which require DNA as a template. Histones thereby play a central role in transcription regulation, DNA repair, DNA replication and chromosomal stability. DNA accessibility is regulated via a complex set of post-translational modifications of histones, also called histone code, and nucleosome remodeling. The protein is Histone H2B.3 of Zea mays (Maize).